A 302-amino-acid polypeptide reads, in one-letter code: N-acetylaspartate synthetase (302 aa).

The segment covering 46–60 has biased composition (pro residues); it reads PGPAAAPPAPPPAPV. Residues 46-72 are disordered; sequence PGPAAAPPAPPPAPVAQPHGGAGGAGP. A helical membrane pass occupies residues 121–141; sequence YALLAALCFAVSRSLLLTCLV. Residues 143–283 enclose the N-acetyltransferase domain; the sequence is AALLGLRYYY…VLPGMTLSLA (141 aa).

It belongs to the NAT8 family. Expressed in brain.

It is found in the cytoplasm. Its subcellular location is the microsome membrane. It localises to the mitochondrion membrane. The protein resides in the endoplasmic reticulum membrane. It carries out the reaction L-aspartate + acetyl-CoA = N-acetyl-L-aspartate + CoA + H(+). Its activity is regulated as follows. Aminooxyacetic acid (AOAA) blocks its activity in both cytoplasm and mitochondria. Catalyzes the synthesis of N-acetylaspartate acid (NAA) from L-aspartate and acetyl-CoA. Promotes dopamine uptake by regulating TNF-alpha expression. Attenuates methamphetamine-induced inhibition of dopamine uptake. The chain is N-acetylaspartate synthetase from Homo sapiens (Human).